The chain runs to 398 residues: Immunoglobulin heavy constant alpha 1 (398 aa).

Residues 1-364 (ASPTSPKVFP…TPGANLWPTT (364 aa)) are Extracellular-facing. The 93-residue stretch at 6-98 (PKVFPLSLCS…HYTNPSQDVT (93 aa)) folds into the Ig-like 1 domain. Cystine bridges form between cysteine 26/cysteine 85 and cysteine 77/cysteine 101. Positions 96–122 (DVTVPCPVPSTPPTPSPSTPPTPSPSC) are disordered. Over residues 101–119 (CPVPSTPPTPSPSTPPTPS) the composition is skewed to pro residues. An O-linked (GalNAc...) serine glycan is attached at serine 105. O-linked (GalNAc...) threonine glycans are attached at residues threonine 106 and threonine 109. Serine 111 and serine 113 each carry an O-linked (GalNAc...) serine glycan. Threonine 114 and threonine 117 each carry an O-linked (GalNAc...) threonine glycan. 2 O-linked (GalNAc...) serine glycosylation sites follow: serine 119 and serine 121. Intrachain disulfides connect cysteine 123-cysteine 180, cysteine 147-cysteine 204, and cysteine 250-cysteine 313. Ig-like domains are found at residues 125-220 (PRLS…ATLS) and 228-330 (PEVH…KTID). Asparagine 144 is a glycosylation site (N-linked (GlcNAc...) (complex) asparagine). An N-linked (GlcNAc...) (complex) asparagine glycan is attached at proline 340. Position 352 (glutamate 352) interacts with 3-hydroxy-L-kynurenine. A helical transmembrane segment spans residues 365–383 (ITFLTLFLLSLFYSTALTV). At 384–398 (TSVRGPSGNREGPQY) the chain is on the cytoplasmic side.

In terms of assembly, immunoglobulins are composed of two identical heavy chains and two identical light chains; disulfide-linked. Monomeric or polymeric. Part of the secretory IgA (sIgA) complex that consists of two, four or five IgA monomers, and two additional non-Ig polypeptides, namely the JCHAIN and the secretory component (the proteolytic product of PIGR). Post-translationally, 3-Hydroxykynurenine, an oxidized tryptophan metabolite that is common in biological fluids, reacts with alpha-1-microglobulin to form heterogeneous polycyclic chromophores including hydroxanthommatin. The chromophore reacts with accessible cysteines forming non-reducible thioether cross-links with Ig alpha-1 chain C region Cys-352. N- and O-glycosylated. N-glycan at Asn-144: Hex5HexNAc4.

The protein resides in the secreted. It localises to the cell membrane. In terms of biological role, constant region of immunoglobulin heavy chains. Immunoglobulins, also known as antibodies, are membrane-bound or secreted glycoproteins produced by B lymphocytes. In the recognition phase of humoral immunity, the membrane-bound immunoglobulins serve as receptors which, upon binding of a specific antigen, trigger the clonal expansion and differentiation of B lymphocytes into immunoglobulins-secreting plasma cells. Secreted immunoglobulins mediate the effector phase of humoral immunity, which results in the elimination of bound antigens. The antigen binding site is formed by the variable domain of one heavy chain, together with that of its associated light chain. Thus, each immunoglobulin has two antigen binding sites with remarkable affinity for a particular antigen. The variable domains are assembled by a process called V-(D)-J rearrangement and can then be subjected to somatic hypermutations which, after exposure to antigen and selection, allow affinity maturation for a particular antigen. Ig alpha is the major immunoglobulin class in body secretions. The sequence is that of Immunoglobulin heavy constant alpha 1 from Homo sapiens (Human).